Reading from the N-terminus, the 418-residue chain is Ceramide synthase LAC1 (418 aa).

Over residues 1 to 14 (MSTIKPSPSNNNLK) the composition is skewed to polar residues. Residues 1 to 25 (MSTIKPSPSNNNLKVRSRPRRKSSI) form a disordered region. At Ser2 the chain carries N-acetylserine. Over 2–81 (STIKPSPSNN…WFSFREISYR (80 aa)) the chain is Cytoplasmic. Residues 15–24 (VRSRPRRKSS) show a composition bias toward basic residues. Phosphoserine is present on residues Ser23 and Ser24. The chain crosses the membrane as a helical span at residues 82 to 102 (HAWIAPLMILIAVYSAYFTSG). A glycan (N-linked (GlcNAc...) asparagine) is linked at Asn103. Over 103–130 (NTTKTNVLHRFVAVSYQIGDTNAYGKGI) the chain is Lumenal. Residues 131-155 (NDLCFVFYYMIFFTFLREFLMDVVI) traverse the membrane as a helical segment. Over 156–172 (RPFAIRLHVTSKHRIKR) the chain is Cytoplasmic. In terms of domain architecture, TLC spans 168-385 (HRIKRIMEQM…FRVLYRILWR (218 aa)). Residues Arg169, Arg172, and Tyr182 each contribute to the fumonisin B1 site. A helical membrane pass occupies residues 173–194 (IMEQMYAIFYTGVSGPFGIYCM). Over 195–217 (YHSDLWFFNTKAMYRTYPDFTNP) the chain is Lumenal. The chain crosses the membrane as a helical span at residues 218 to 240 (FLFKVFYLGQAAFWAQQACILVL). Hexacosanoate contacts are provided by Tyr224 and Trp231. Trp231 contacts fumonisin B1. Trp231 contacts hexacosanoyl-CoA. Over 241-249 (QLEKPRKDH) the chain is Cytoplasmic. Residues 250 to 268 (NELTFHHIVTLLLIWSSYV) form a helical membrane-spanning segment. His255 provides a ligand contact to fumonisin B1. The hexacosanoate site is built by His255, Thr259, Leu262, Ile263, Ser265, Ser266, Phe269, Phe271, Met274, Gly275, Ile278, Tyr279, Met282, Asp283, and Asp286. 3 residues coordinate hexacosanoyl-CoA: His255, Thr259, and Leu262. Hexacosanoyl-CoA-binding residues include Ser265 and Ser266. The Lumenal portion of the chain corresponds to 269–273 (FHFTK). Hexacosanoyl-CoA contacts are provided by Phe271, Met274, Gly275, Ile278, Tyr279, and Met282. The helical transmembrane segment at 274–295 (MGLPIYITMDVSDFLLSFSKTL) threads the bilayer. Residues Asp286, Leu289, Lys293, Asn296, Tyr297, Ala303, Phe304, Phe307, and Trp314 each coordinate fumonisin B1. 4 residues coordinate hexacosanoyl-CoA: Asp286, Leu289, Lys293, and Asn296. The Cytoplasmic segment spans residues 296–305 (NYLDSGLAFF). The chain crosses the membrane as a helical span at residues 306–334 (SFAIFVVAWIYLRHYINLKILWSVLTQFR). Residue Phe307 coordinates hexacosanoyl-CoA. Residues Arg318, Phe343, Tyr348, Ile352, Ser353, Ile356, Val357, Leu360, Ile361, and Trp371 each contribute to the hexacosanoate site. Residue Arg318 participates in hexacosanoyl-CoA binding. Over 335-353 (TEGNYVLNFATQQYKCWIS) the chain is Lumenal. 6 residues coordinate hexacosanoyl-CoA: Tyr348, Ile352, Ser353, Ile356, Val357, and Leu360. A helical membrane pass occupies residues 354 to 382 (LPIVFVLIGALQLVNLYWLFLIFRVLYRI). Fumonisin B1-binding residues include Trp371, Ile375, Val378, Ile382, and Arg385. A hexacosanoyl-CoA-binding site is contributed by Trp371. Over 383-418 (LWRGILKDDRSDSESDEESDESSTTPTDSTPTKKDI) the chain is Cytoplasmic. Residues 390-418 (DDRSDSESDEESDESSTTPTDSTPTKKDI) are disordered.

Belongs to the sphingosine N-acyltransferase family. As to quaternary structure, component of the ceramide synthase complex composed of at least LAC1, LAG1 and LIP1. Forms a heterotetrameric complex, where one unit of the LIP1 homodimer interacts with LAC1 and the other with either LAC1 or LAG1. In terms of processing, phosphorylated; phosphorylation is induced upon disruption of sphingolipid synthesis. Phosphorylation is inhibited by exogenous addition of phytosphingosine.

The protein localises to the endoplasmic reticulum membrane. The catalysed reaction is a very long-chain fatty acyl-CoA + a sphingoid base = an N-(very-long-chain fatty acyl)-sphingoid base + CoA + H(+). It catalyses the reaction hexacosanoyl-CoA + sphinganine = N-hexacosanoylsphinganine + CoA + H(+). It carries out the reaction eicosanoyl-CoA + sphinganine = N-eicosanoylsphinganine + CoA + H(+). The enzyme catalyses a fatty acyl-CoA + sphinganine = an N-acylsphinganine + CoA + H(+). The catalysed reaction is (4R)-hydroxysphinganine + a fatty acyl-CoA = an N-acyl-(4R)-4-hydroxysphinganine + CoA + H(+). The protein operates within lipid metabolism; sphingolipid metabolism. As part of the ceramide synthase complex, inhibited by the sphinganine analog mycotoxin, fumonisin B1 (FB1). Activated by ACB1, as part of the ceramide synthase complex. Its function is as follows. Component of the ceramide synthase complex that catalyzes the transfer of the acyl chain from acyl-CoA to a sphingoid base, with high selectivity toward hexacosanoyl-CoA (C26:0-CoA). N-acylates sphinganine and phytosphingosine bases to form dihydroceramides and phytoceramides, respectively. Redundant with LAG1. Facilitates ER-to-Golgi transport of GPI-anchored proteins. Has a lower affinity for phytosphingosine (PHS) than dihydrosphingosine (DHS); PHS is required for the synthesis of phytoceramides and the formation of nuclear envelopes. Along with LAG1, plays a role in pheromone-induced MAP kinase-activation of mating and formation of diploid cells. May also play a role, together with LAG1, in the polarized membrane distribution of phosphatidylinositol 4,5 biphosphate required for STE5 localization to the plasma membrane. The sequence is that of Ceramide synthase LAC1 (LAC1) from Saccharomyces cerevisiae (strain ATCC 204508 / S288c) (Baker's yeast).